A 199-amino-acid polypeptide reads, in one-letter code: Recombination protein RecR (199 aa).

A C4-type zinc finger spans residues 57-72 (CEICGNMDTENICRIC). Positions 80 to 175 (SVIAIVETVA…KISRLASGIP (96 aa)) constitute a Toprim domain.

The protein belongs to the RecR family.

In terms of biological role, may play a role in DNA repair. It seems to be involved in an RecBC-independent recombinational process of DNA repair. It may act with RecF and RecO. The chain is Recombination protein RecR from Rickettsia canadensis (strain McKiel).